A 320-amino-acid polypeptide reads, in one-letter code: ATP-dependent 6-phosphofructokinase (320 aa).

Gly12 contributes to the ATP binding site. 22–26 (RSVIR) is a binding site for ADP. ATP contacts are provided by residues 73–74 (RF) and 103–106 (GDGS). Asp104 serves as a coordination point for Mg(2+). 126–128 (TID) serves as a coordination point for substrate. Residue Asp128 is the Proton acceptor of the active site. Arg155 contacts ADP. Residues Arg163 and 170–172 (MGR) contribute to the substrate site. ADP contacts are provided by residues 186–188 (GAE) and 214–216 (KRH). Residues Glu223, Arg244, and 250–253 (HIQR) contribute to the substrate site.

Belongs to the phosphofructokinase type A (PFKA) family. ATP-dependent PFK group I subfamily. Prokaryotic clade 'B1' sub-subfamily. As to quaternary structure, homotetramer. It depends on Mg(2+) as a cofactor.

It is found in the cytoplasm. The catalysed reaction is beta-D-fructose 6-phosphate + ATP = beta-D-fructose 1,6-bisphosphate + ADP + H(+). The protein operates within carbohydrate degradation; glycolysis; D-glyceraldehyde 3-phosphate and glycerone phosphate from D-glucose: step 3/4. Its activity is regulated as follows. Allosterically activated by ADP and other diphosphonucleosides, and allosterically inhibited by phosphoenolpyruvate. Its function is as follows. Catalyzes the phosphorylation of D-fructose 6-phosphate to fructose 1,6-bisphosphate by ATP, the first committing step of glycolysis. The polypeptide is ATP-dependent 6-phosphofructokinase (Tolumonas auensis (strain DSM 9187 / NBRC 110442 / TA 4)).